The sequence spans 596 residues: Elongation factor 4 (596 aa).

The tr-type G domain maps to 2-183 (KNIRNFSIIA…EIIRRIPAPN (182 aa)). GTP is bound by residues 14 to 19 (DHGKST) and 130 to 133 (NKID).

Belongs to the TRAFAC class translation factor GTPase superfamily. Classic translation factor GTPase family. LepA subfamily.

Its subcellular location is the cell inner membrane. The catalysed reaction is GTP + H2O = GDP + phosphate + H(+). Its function is as follows. Required for accurate and efficient protein synthesis under certain stress conditions. May act as a fidelity factor of the translation reaction, by catalyzing a one-codon backward translocation of tRNAs on improperly translocated ribosomes. Back-translocation proceeds from a post-translocation (POST) complex to a pre-translocation (PRE) complex, thus giving elongation factor G a second chance to translocate the tRNAs correctly. Binds to ribosomes in a GTP-dependent manner. The sequence is that of Elongation factor 4 from Wolinella succinogenes (strain ATCC 29543 / DSM 1740 / CCUG 13145 / JCM 31913 / LMG 7466 / NCTC 11488 / FDC 602W) (Vibrio succinogenes).